Reading from the N-terminus, the 264-residue chain is Somatomedin-B and thrombospondin type-1 domain-containing protein (264 aa).

Positions 1-20 are cleaved as a signal peptide; the sequence is MRTLWMALCALSRLWPGAQA. The region spanning 24–75 is the SMB domain; that stretch reads EAGRCCPGRDPACFARGWRLDRVYGTCFCDQACRFTGDCCFDYDRACPARPC. Disulfide bonds link cysteine 28–cysteine 36, cysteine 28–cysteine 52, cysteine 36–cysteine 70, cysteine 50–cysteine 52, cysteine 50–cysteine 63, cysteine 56–cysteine 62, and cysteine 63–cysteine 70. In terms of domain architecture, TSP type-1 spans 74 to 127; the sequence is PCFVGEWSPWSGCADQCKPTTRVRRRSVQQEPQNGGAPCPPLEERAGCLEYSTP. Asparagine 227 is a glycosylation site (N-linked (GlcNAc...) asparagine).

This sequence belongs to the thrombospondin family. In terms of tissue distribution, detected in aorta extracellular matrix (at protein level).

It is found in the secreted. Its subcellular location is the extracellular space. It localises to the extracellular matrix. In Homo sapiens (Human), this protein is Somatomedin-B and thrombospondin type-1 domain-containing protein (SBSPON).